The sequence spans 96 residues: Large ribosomal subunit protein bL28 (96 aa).

Belongs to the bacterial ribosomal protein bL28 family.

The sequence is that of Large ribosomal subunit protein bL28 from Parvibaculum lavamentivorans (strain DS-1 / DSM 13023 / NCIMB 13966).